The following is an 81-amino-acid chain: Large ribosomal subunit protein bL31B (81 aa).

The protein belongs to the bacterial ribosomal protein bL31 family. Type B subfamily. As to quaternary structure, part of the 50S ribosomal subunit.

The sequence is that of Large ribosomal subunit protein bL31B from Borreliella afzelii (strain PKo) (Borrelia afzelii).